A 223-amino-acid chain; its full sequence is Phosphoribosylformylglycinamidine synthase subunit PurQ (223 aa).

Positions 4 to 223 (RIGVITFPGT…FQSVLSTLVS (220 aa)) constitute a Glutamine amidotransferase type-1 domain. Cysteine 87 acts as the Nucleophile in catalysis. Residues histidine 195 and glutamate 197 contribute to the active site.

In terms of assembly, part of the FGAM synthase complex composed of 1 PurL, 1 PurQ and 2 PurS subunits.

It is found in the cytoplasm. It carries out the reaction N(2)-formyl-N(1)-(5-phospho-beta-D-ribosyl)glycinamide + L-glutamine + ATP + H2O = 2-formamido-N(1)-(5-O-phospho-beta-D-ribosyl)acetamidine + L-glutamate + ADP + phosphate + H(+). The enzyme catalyses L-glutamine + H2O = L-glutamate + NH4(+). It functions in the pathway purine metabolism; IMP biosynthesis via de novo pathway; 5-amino-1-(5-phospho-D-ribosyl)imidazole from N(2)-formyl-N(1)-(5-phospho-D-ribosyl)glycinamide: step 1/2. Functionally, part of the phosphoribosylformylglycinamidine synthase complex involved in the purines biosynthetic pathway. Catalyzes the ATP-dependent conversion of formylglycinamide ribonucleotide (FGAR) and glutamine to yield formylglycinamidine ribonucleotide (FGAM) and glutamate. The FGAM synthase complex is composed of three subunits. PurQ produces an ammonia molecule by converting glutamine to glutamate. PurL transfers the ammonia molecule to FGAR to form FGAM in an ATP-dependent manner. PurS interacts with PurQ and PurL and is thought to assist in the transfer of the ammonia molecule from PurQ to PurL. This chain is Phosphoribosylformylglycinamidine synthase subunit PurQ, found in Corynebacterium jeikeium (strain K411).